A 147-amino-acid chain; its full sequence is Large ribosomal subunit protein uL15 (147 aa).

Residues 1–57 (MDLSNLSPAPGSTKARKRLGRGPGSGNGTTAGRGNKGHNSRSGGGVRPGFEGGQMPL) form a disordered region. 2 stretches are compositionally biased toward gly residues: residues 21-31 (RGPGSGNGTTA) and 42-52 (SGGGVRPGFEG).

The protein belongs to the universal ribosomal protein uL15 family. In terms of assembly, part of the 50S ribosomal subunit.

Binds to the 23S rRNA. This is Large ribosomal subunit protein uL15 from Desulfosudis oleivorans (strain DSM 6200 / JCM 39069 / Hxd3) (Desulfococcus oleovorans).